Consider the following 445-residue polypeptide: Exodeoxyribonuclease 7 large subunit (445 aa).

This sequence belongs to the XseA family. In terms of assembly, heterooligomer composed of large and small subunits.

It localises to the cytoplasm. The catalysed reaction is Exonucleolytic cleavage in either 5'- to 3'- or 3'- to 5'-direction to yield nucleoside 5'-phosphates.. Bidirectionally degrades single-stranded DNA into large acid-insoluble oligonucleotides, which are then degraded further into small acid-soluble oligonucleotides. The sequence is that of Exodeoxyribonuclease 7 large subunit from Staphylococcus saprophyticus subsp. saprophyticus (strain ATCC 15305 / DSM 20229 / NCIMB 8711 / NCTC 7292 / S-41).